Consider the following 362-residue polypeptide: Glutamate 5-kinase (362 aa).

Lys3 is an ATP binding site. Substrate is bound by residues Ser43, Asp128, and Asn140. Residues Thr160 to Asp161 and Thr202 to Lys208 contribute to the ATP site. Residues Ala267–Ser348 enclose the PUA domain.

This sequence belongs to the glutamate 5-kinase family.

The protein localises to the cytoplasm. It catalyses the reaction L-glutamate + ATP = L-glutamyl 5-phosphate + ADP. It participates in amino-acid biosynthesis; L-proline biosynthesis; L-glutamate 5-semialdehyde from L-glutamate: step 1/2. In terms of biological role, catalyzes the transfer of a phosphate group to glutamate to form L-glutamate 5-phosphate. The sequence is that of Glutamate 5-kinase from Xanthomonas oryzae pv. oryzae (strain MAFF 311018).